The sequence spans 425 residues: Serine--tRNA ligase (425 aa).

The segment at Asn-110–Pro-134 is disordered. Basic and acidic residues predominate over residues Pro-117 to Pro-134. L-serine is bound at residue Thr-233 to Glu-235. Arg-264–Glu-266 contacts ATP. Glu-287 contacts L-serine. ATP is bound at residue Glu-351–Ser-354. Ser-385 serves as a coordination point for L-serine.

Belongs to the class-II aminoacyl-tRNA synthetase family. Type-1 seryl-tRNA synthetase subfamily. As to quaternary structure, homodimer. The tRNA molecule binds across the dimer.

The protein localises to the cytoplasm. It catalyses the reaction tRNA(Ser) + L-serine + ATP = L-seryl-tRNA(Ser) + AMP + diphosphate + H(+). It carries out the reaction tRNA(Sec) + L-serine + ATP = L-seryl-tRNA(Sec) + AMP + diphosphate + H(+). Its pathway is aminoacyl-tRNA biosynthesis; selenocysteinyl-tRNA(Sec) biosynthesis; L-seryl-tRNA(Sec) from L-serine and tRNA(Sec): step 1/1. Its function is as follows. Catalyzes the attachment of serine to tRNA(Ser). Is also able to aminoacylate tRNA(Sec) with serine, to form the misacylated tRNA L-seryl-tRNA(Sec), which will be further converted into selenocysteinyl-tRNA(Sec). The polypeptide is Serine--tRNA ligase (Synechococcus sp. (strain RCC307)).